A 1067-amino-acid polypeptide reads, in one-letter code: Dorsal-ventral patterning protein tolloid (1067 aa).

A signal peptide spans 1–36; it reads MKGMRLMPMKMKAKLVVLSVGALWMMMFFLVDYAEG. Positions 37–136 are excised as a propeptide; the sequence is RRLSQLPESE…NGQPIQRRRR (100 aa). A Peptidase M12A domain is found at 136–338; that stretch reads RAVTVRKERT…VQANLLYKCA (203 aa). Residue asparagine 176 is glycosylated (N-linked (GlcNAc...) asparagine). Intrachain disulfides connect cysteine 179–cysteine 337, cysteine 201–cysteine 223, cysteine 203–cysteine 204, cysteine 340–cysteine 390, and cysteine 417–cysteine 439. Histidine 231 serves as a coordination point for Zn(2+). Glutamate 232 is an active-site residue. Histidine 235 and histidine 241 together coordinate Zn(2+). Short sequence motifs (cell attachment site) lie at residues 245–247 and 325–327; these read RGD. CUB domains lie at 340–477 and 478–591; these read CGRT…FEVV and CGGD…LMLD. N-linked (GlcNAc...) asparagine glycosylation occurs at asparagine 441. 6 disulfides stabilise this stretch: cysteine 478–cysteine 505, cysteine 532–cysteine 554, cysteine 595–cysteine 606, cysteine 602–cysteine 615, cysteine 617–cysteine 630, and cysteine 634–cysteine 662. N-linked (GlcNAc...) asparagine glycosylation occurs at asparagine 543. In terms of domain architecture, EGF-like 1; calcium-binding spans 591-631; sequence DVDECKFTDHGCQHLCINTLGSYQCGCRAGYELQANGKTCE. The CUB 3 domain maps to 634–753; sequence CGGVVDATKS…SGFVAKFVID (120 aa). N-linked (GlcNAc...) asparagine glycans are attached at residues asparagine 644 and asparagine 677. 8 disulfides stabilise this stretch: cysteine 693–cysteine 716, cysteine 757–cysteine 768, cysteine 764–cysteine 777, cysteine 779–cysteine 792, cysteine 797–cysteine 823, cysteine 850–cysteine 872, cysteine 910–cysteine 940, and cysteine 967–cysteine 989. Residues 753–793 enclose the EGF-like 2; calcium-binding domain; sequence DVDECSMNNGGCQHRCRNTFGSYQCSCRNGYTLAENGHNCT. Asparagine 791 carries N-linked (GlcNAc...) asparagine glycosylation. CUB domains follow at residues 797-909 and 910-1026; these read CKFE…FVSE and CGGY…FMAV. Residues asparagine 864 and asparagine 918 are each glycosylated (N-linked (GlcNAc...) asparagine).

Zn(2+) serves as cofactor.

Its function is as follows. Metalloprotease which cleaves TGF-beta family ligands daw, Actbeta and myo in vitro. Cleavage of daw enhances its signaling activity. Cleaves dorsal-ventral patterning protein sog. Processes sog more efficiently than metalloprotease tld which also cleaves sog. Required for normal dorsal development. TLD may interact physically with DPP-C protein. The protein is Dorsal-ventral patterning protein tolloid (tld) of Drosophila melanogaster (Fruit fly).